A 614-amino-acid chain; its full sequence is Translation initiation factor IF-2 (614 aa).

Residues 115-283 (ARAPIVTIMG…ILLIAELNDY (169 aa)) form the tr-type G domain. Residues 124-131 (GHVDHGKT) are G1. A GTP-binding site is contributed by 124 to 131 (GHVDHGKT). A G2 region spans residues 149–153 (GITQH). Residues 170-173 (DTPG) are G3. Residues 170-174 (DTPGH) and 224-227 (NKMD) each bind GTP. Residues 224 to 227 (NKMD) are G4. The segment at 260–262 (SAL) is G5.

The protein belongs to the TRAFAC class translation factor GTPase superfamily. Classic translation factor GTPase family. IF-2 subfamily.

It localises to the cytoplasm. Functionally, one of the essential components for the initiation of protein synthesis. Protects formylmethionyl-tRNA from spontaneous hydrolysis and promotes its binding to the 30S ribosomal subunits. Also involved in the hydrolysis of GTP during the formation of the 70S ribosomal complex. This Ureaplasma urealyticum serovar 10 (strain ATCC 33699 / Western) protein is Translation initiation factor IF-2.